We begin with the raw amino-acid sequence, 397 residues long: Succinate--CoA ligase [ADP-forming] subunit beta (397 aa).

The ATP-grasp domain occupies 9–254; sequence KALLRQYGAP…ETEEDPKELA (246 aa). ATP contacts are provided by residues K46, 53 to 55, E109, S112, and E117; that span reads GRG. Positions 209 and 223 each coordinate Mg(2+). Substrate contacts are provided by residues N274 and 331-333; that span reads GIM.

This sequence belongs to the succinate/malate CoA ligase beta subunit family. Heterotetramer of two alpha and two beta subunits. Requires Mg(2+) as cofactor.

The enzyme catalyses succinate + ATP + CoA = succinyl-CoA + ADP + phosphate. It carries out the reaction GTP + succinate + CoA = succinyl-CoA + GDP + phosphate. It participates in carbohydrate metabolism; tricarboxylic acid cycle; succinate from succinyl-CoA (ligase route): step 1/1. Succinyl-CoA synthetase functions in the citric acid cycle (TCA), coupling the hydrolysis of succinyl-CoA to the synthesis of either ATP or GTP and thus represents the only step of substrate-level phosphorylation in the TCA. The beta subunit provides nucleotide specificity of the enzyme and binds the substrate succinate, while the binding sites for coenzyme A and phosphate are found in the alpha subunit. The chain is Succinate--CoA ligase [ADP-forming] subunit beta from Paracoccus denitrificans (strain Pd 1222).